A 154-amino-acid polypeptide reads, in one-letter code: Protein-export protein SecB (154 aa).

Belongs to the SecB family. Homotetramer, a dimer of dimers. One homotetramer interacts with 1 SecA dimer.

The protein localises to the cytoplasm. One of the proteins required for the normal export of preproteins out of the cell cytoplasm. It is a molecular chaperone that binds to a subset of precursor proteins, maintaining them in a translocation-competent state. It also specifically binds to its receptor SecA. The polypeptide is Protein-export protein SecB (Blochmanniella pennsylvanica (strain BPEN)).